The sequence spans 460 residues: MATGKIIQVIGAVVDVEFPQDAVPKVYDALEVENGAEKLVLEVQQQLGGGIVRCIAMGSSDGLRRGLNVNNLGHPIEVPVGKATLGRIMNVLGDPIDMKGDIGEEERWAIHRSAPSYEELSNSQELLETGIKVIDLMCPFAKGGKVGLFGGAGVGKTVNMMELIRNIAIEHSGYSVFAGVGERTREGNDFYHEMTDSNVIDKVSLVYGQMNEPPGNRLRVALTGLTMAEKFRDEGRDVLLFVDNIYRYTLAGTEVSALLGRMPSAVGYQPTLAEEMGVLQERITSTKTGSITSVQAVYVPADDLTDPSPATTFAHLDATVVLSRQIASLGIYPAVDPLDSTSRQLDPLVVGQEHYDVARGVQSILQRYQELKDIIAILGMDELSEEDKLVVSRARKIQRFLSQPFFVAEVFTGSPGKYVSLKDTIRGFKGIMEGEYDHLPEQAFYMVGSIDEVVEKAKKL.

An ATP-binding site is contributed by Gly-150–Thr-157.

Belongs to the ATPase alpha/beta chains family. As to quaternary structure, F-type ATPases have 2 components, CF(1) - the catalytic core - and CF(0) - the membrane proton channel. CF(1) has five subunits: alpha(3), beta(3), gamma(1), delta(1), epsilon(1). CF(0) has three main subunits: a(1), b(2) and c(9-12). The alpha and beta chains form an alternating ring which encloses part of the gamma chain. CF(1) is attached to CF(0) by a central stalk formed by the gamma and epsilon chains, while a peripheral stalk is formed by the delta and b chains.

It is found in the cell inner membrane. The catalysed reaction is ATP + H2O + 4 H(+)(in) = ADP + phosphate + 5 H(+)(out). Its function is as follows. Produces ATP from ADP in the presence of a proton gradient across the membrane. The catalytic sites are hosted primarily by the beta subunits. The polypeptide is ATP synthase subunit beta (Pectobacterium atrosepticum (strain SCRI 1043 / ATCC BAA-672) (Erwinia carotovora subsp. atroseptica)).